Consider the following 141-residue polypeptide: Hemoglobin subunit alpha (141 aa).

In terms of domain architecture, Globin spans 1–141 (VLSGTDKTNV…VGLVLTAKYR (141 aa)). O2 is bound at residue H58. H87 lines the heme b pocket.

The protein belongs to the globin family. Heterotetramer of two alpha chains and two beta chains. As to expression, red blood cells.

Involved in oxygen transport from the lung to the various peripheral tissues. The sequence is that of Hemoglobin subunit alpha (HBA) from Psittacula krameri (Rose-ringed parakeet).